The sequence spans 165 residues: Chorismate pyruvate-lyase (165 aa).

Substrate is bound by residues methionine 35, arginine 77, leucine 115, and glutamate 156.

This sequence belongs to the UbiC family. Monomer.

The protein localises to the cytoplasm. The enzyme catalyses chorismate = 4-hydroxybenzoate + pyruvate. The protein operates within cofactor biosynthesis; ubiquinone biosynthesis. Its function is as follows. Removes the pyruvyl group from chorismate, with concomitant aromatization of the ring, to provide 4-hydroxybenzoate (4HB) for the ubiquinone pathway. The polypeptide is Chorismate pyruvate-lyase (Salmonella gallinarum (strain 287/91 / NCTC 13346)).